A 64-amino-acid polypeptide reads, in one-letter code: Large ribosomal subunit protein uL29 (64 aa).

The protein belongs to the universal ribosomal protein uL29 family.

This Dichelobacter nodosus (strain VCS1703A) protein is Large ribosomal subunit protein uL29.